Here is a 187-residue protein sequence, read N- to C-terminus: Elongation factor P (187 aa).

The protein belongs to the elongation factor P family.

It is found in the cytoplasm. Its pathway is protein biosynthesis; polypeptide chain elongation. Its function is as follows. Involved in peptide bond synthesis. Stimulates efficient translation and peptide-bond synthesis on native or reconstituted 70S ribosomes in vitro. Probably functions indirectly by altering the affinity of the ribosome for aminoacyl-tRNA, thus increasing their reactivity as acceptors for peptidyl transferase. The chain is Elongation factor P from Granulibacter bethesdensis (strain ATCC BAA-1260 / CGDNIH1).